The following is a 493-amino-acid chain: Aluminum-activated malate transporter 1 (493 aa).

5 helical membrane passes run 28-48 (VGLA…GPFT), 51-71 (FGIN…FSVG), 104-124 (TVEP…STFV), 133-153 (KFDY…LSGF), and 169-189 (VVIG…VWAG). Phosphoserine is present on residues Ser-320 and Ser-327. Thr-385 is subject to Phosphothreonine. Basic and acidic residues predominate over residues 441 to 452 (DNDRSNNVDDSR). A disordered region spans residues 441 to 460 (DNDRSNNVDDSRGGSSQDSC).

The protein belongs to the aromatic acid exporter (TC 2.A.85) family. Post-translationally, phosphorylated. A reversible phosphorylation is required for activation. Expressed in roots, but not in shoots. Detected in the root apex in absence of aluminum stress and in root apices, the stele and endodermis of the elongating zone of primary and lateral roots after aluminum stress. Not expressed in cortical and epidermal cells.

Its subcellular location is the cell membrane. Activated by external aluminum. Its function is as follows. Malate transporter critical for aluminum tolerance. The STOP1 transcription factor is required for ALMT1 expression. The chain is Aluminum-activated malate transporter 1 (ALMT1) from Arabidopsis thaliana (Mouse-ear cress).